Here is a 525-residue protein sequence, read N- to C-terminus: Peptide chain release factor 3 (525 aa).

Residues A9–Q276 form the tr-type G domain. GTP contacts are provided by residues S18 to T25, D86 to H90, and N140 to D143.

Belongs to the TRAFAC class translation factor GTPase superfamily. Classic translation factor GTPase family. PrfC subfamily.

It is found in the cytoplasm. Its function is as follows. Increases the formation of ribosomal termination complexes and stimulates activities of RF-1 and RF-2. It binds guanine nucleotides and has strong preference for UGA stop codons. It may interact directly with the ribosome. The stimulation of RF-1 and RF-2 is significantly reduced by GTP and GDP, but not by GMP. The chain is Peptide chain release factor 3 from Francisella tularensis subsp. tularensis (strain WY96-3418).